A 587-amino-acid chain; its full sequence is Zinc finger protein 69 (587 aa).

A disordered region spans residues 42–128 (NGTQQESLAD…TPGTTAAGSQ (87 aa)). The KRAB domain maps to 76–147 (HDEATPGTPA…VDLSQEEWGQ (72 aa)). C2H2-type zinc fingers lie at residues 271–293 (HKKK…ILEQ), 299–321 (KPAR…CMRA), 327–349 (NVCE…HTGE), 355–377 (KECG…HTGE), 383–405 (EECG…HTGE), 411–433 (DKCQ…HSGE), 439–461 (SECG…HTGE), 467–489 (TSCC…HTGE), and 495–517 (KECG…HTGV). Residues 564–587 (SRHQKIHRRNTFRDDPGHENKRQL) form a disordered region. A compositionally biased stretch (basic and acidic residues) spans 574–587 (TFRDDPGHENKRQL).

Belongs to the krueppel C2H2-type zinc-finger protein family.

The protein resides in the nucleus. In terms of biological role, putative transcription factor that appears to regulate lipid metabolism. This Mus musculus (Mouse) protein is Zinc finger protein 69.